A 110-amino-acid polypeptide reads, in one-letter code: Flagellar hook-basal body complex protein FliE (110 aa).

Belongs to the FliE family.

It is found in the bacterial flagellum basal body. The protein is Flagellar hook-basal body complex protein FliE of Pseudomonas putida (strain W619).